Consider the following 504-residue polypeptide: Signal recognition particle receptor FtsY (504 aa).

Disordered stretches follow at residues 1–71 and 116–135; these read MFNW…DDYL and ESDQ…TEIT. GTP-binding positions include 308-315, 391-395, and 455-458; these read GVNGAGKT, DTAGR, and TKLD.

The protein belongs to the GTP-binding SRP family. FtsY subfamily. Part of the signal recognition particle protein translocation system, which is composed of SRP and FtsY.

The protein resides in the cell inner membrane. The protein localises to the cytoplasm. It carries out the reaction GTP + H2O = GDP + phosphate + H(+). Involved in targeting and insertion of nascent membrane proteins into the cytoplasmic membrane. Acts as a receptor for the complex formed by the signal recognition particle (SRP) and the ribosome-nascent chain (RNC). The protein is Signal recognition particle receptor FtsY of Synechocystis sp. (strain ATCC 27184 / PCC 6803 / Kazusa).